Consider the following 122-residue polypeptide: Large ribosomal subunit protein uL14 (122 aa).

Belongs to the universal ribosomal protein uL14 family. In terms of assembly, part of the 50S ribosomal subunit. Forms a cluster with proteins L3 and L19. In the 70S ribosome, L14 and L19 interact and together make contacts with the 16S rRNA in bridges B5 and B8.

In terms of biological role, binds to 23S rRNA. Forms part of two intersubunit bridges in the 70S ribosome. The protein is Large ribosomal subunit protein uL14 of Lawsonia intracellularis (strain PHE/MN1-00).